Consider the following 352-residue polypeptide: tRNA-specific 2-thiouridylase MnmA (352 aa).

ATP is bound by residues 6–13 (AMSGGVDS) and Leu32. Residue Cys101 is the Nucleophile of the active site. Cys101 and Cys194 are disulfide-bonded. Gly125 provides a ligand contact to ATP. The tract at residues 144-146 (KDQ) is interaction with tRNA. Cys194 acts as the Cysteine persulfide intermediate in catalysis.

The protein belongs to the MnmA/TRMU family.

It localises to the cytoplasm. It catalyses the reaction S-sulfanyl-L-cysteinyl-[protein] + uridine(34) in tRNA + AH2 + ATP = 2-thiouridine(34) in tRNA + L-cysteinyl-[protein] + A + AMP + diphosphate + H(+). Functionally, catalyzes the 2-thiolation of uridine at the wobble position (U34) of tRNA, leading to the formation of s(2)U34. The sequence is that of tRNA-specific 2-thiouridylase MnmA from Frankia alni (strain DSM 45986 / CECT 9034 / ACN14a).